The primary structure comprises 344 residues: Uroporphyrinogen decarboxylase (344 aa).

Substrate contacts are provided by residues 25–29 (RQAGR), aspartate 75, tyrosine 152, serine 207, and histidine 323.

It belongs to the uroporphyrinogen decarboxylase family. Homodimer.

Its subcellular location is the cytoplasm. It catalyses the reaction uroporphyrinogen III + 4 H(+) = coproporphyrinogen III + 4 CO2. Its pathway is porphyrin-containing compound metabolism; protoporphyrin-IX biosynthesis; coproporphyrinogen-III from 5-aminolevulinate: step 4/4. In terms of biological role, catalyzes the decarboxylation of four acetate groups of uroporphyrinogen-III to yield coproporphyrinogen-III. This Ruegeria pomeroyi (strain ATCC 700808 / DSM 15171 / DSS-3) (Silicibacter pomeroyi) protein is Uroporphyrinogen decarboxylase.